The following is a 459-amino-acid chain: Cysteine--tRNA ligase (459 aa).

Position 28 (C28) interacts with Zn(2+). Positions 30–40 match the 'HIGH' region motif; sequence ITIYDYCHIGH. 3 residues coordinate Zn(2+): C209, H234, and E238. The 'KMSKS' region signature appears at 266–270; it reads KMSKS. K269 provides a ligand contact to ATP.

Belongs to the class-I aminoacyl-tRNA synthetase family. As to quaternary structure, monomer. Requires Zn(2+) as cofactor.

It is found in the cytoplasm. The enzyme catalyses tRNA(Cys) + L-cysteine + ATP = L-cysteinyl-tRNA(Cys) + AMP + diphosphate. This chain is Cysteine--tRNA ligase, found in Pseudoalteromonas translucida (strain TAC 125).